A 281-amino-acid polypeptide reads, in one-letter code: UPF0294 protein VC_2238 (281 aa).

This sequence belongs to the UPF0294 family.

Its subcellular location is the cytoplasm. The polypeptide is UPF0294 protein VC_2238 (Vibrio cholerae serotype O1 (strain ATCC 39315 / El Tor Inaba N16961)).